The primary structure comprises 214 residues: Potassium-transporting ATPase KdpC subunit (214 aa).

A helical membrane pass occupies residues 17–37 (LWVITALIYPFSMIAIGQILF).

Belongs to the KdpC family. In terms of assembly, the system is composed of three essential subunits: KdpA, KdpB and KdpC.

Its subcellular location is the cell inner membrane. In terms of biological role, part of the high-affinity ATP-driven potassium transport (or Kdp) system, which catalyzes the hydrolysis of ATP coupled with the electrogenic transport of potassium into the cytoplasm. This subunit acts as a catalytic chaperone that increases the ATP-binding affinity of the ATP-hydrolyzing subunit KdpB by the formation of a transient KdpB/KdpC/ATP ternary complex. The chain is Potassium-transporting ATPase KdpC subunit from Microcystis aeruginosa (strain NIES-843 / IAM M-2473).